The sequence spans 495 residues: Trimethylamine methyltransferase MttB (495 aa).

Position 334 (pyrrolysine 334) is a non-standard amino acid, pyrrolysine.

The protein belongs to the trimethylamine methyltransferase family.

The enzyme catalyses Co(I)-[trimethylamine-specific corrinoid protein] + trimethylamine + H(+) = methyl-Co(III)-[trimethylamine-specific corrinoid protein] + dimethylamine. Its pathway is one-carbon metabolism; methanogenesis from trimethylamine. Catalyzes the transfer of a methyl group from trimethylamine to the corrinoid cofactor of MttC. This Methanosarcina barkeri (strain Fusaro / DSM 804) protein is Trimethylamine methyltransferase MttB (mttB).